Here is a 623-residue protein sequence, read N- to C-terminus: Trehalase (623 aa).

Belongs to the glycosyl hydrolase 15 family. Monomer.

It catalyses the reaction alpha,alpha-trehalose + H2O = alpha-D-glucose + beta-D-glucose. It functions in the pathway glycan degradation; trehalose degradation; D-glucose from alpha,alpha-trehalose: step 1/1. Inhibited by validamycin A. In terms of biological role, catalyzes the hydrolysis of alpha,alpha-trehalose into two molecules of D-glucose. This is Trehalase from Thermoplasma volcanium (strain ATCC 51530 / DSM 4299 / JCM 9571 / NBRC 15438 / GSS1).